The primary structure comprises 247 residues: Small ribosomal subunit protein uS2 (247 aa).

Belongs to the universal ribosomal protein uS2 family.

The chain is Small ribosomal subunit protein uS2 from Cupriavidus taiwanensis (strain DSM 17343 / BCRC 17206 / CCUG 44338 / CIP 107171 / LMG 19424 / R1) (Ralstonia taiwanensis (strain LMG 19424)).